Here is a 254-residue protein sequence, read N- to C-terminus: MLNINQVNINLGRKPLLKNISLDIRSGEVTALLGPNGAGKSSLLKALCQSLKTESGEISFYQQPLGQWPKAELARCLAVLPQSSSLSFGFTVEEVVALGLYPLTISQQAGKALVASQLARLDLSPLANQAYPSLSGGEKQRVHLARVLTQLAQAPRAPLLLLDEPTSALDLAQQHKVLTLARELAHSQGYGVIVVLHDLNQAARYADNIVVINNGEIVKQGSPQQVLTKDTLSQVWHYDAQFIHTQDSAMPLIV.

In terms of domain architecture, ABC transporter spans 2 to 239 (LNINQVNINL…DTLSQVWHYD (238 aa)). An ATP-binding site is contributed by 34–41 (GPNGAGKS).

This sequence belongs to the ABC transporter superfamily. Heme (hemin) importer (TC 3.A.1.14.5) family. In terms of assembly, the complex is composed of two ATP-binding proteins (HmuV), two transmembrane proteins (HmuU) and a solute-binding protein (HmuT).

The protein localises to the cell inner membrane. Its function is as follows. Part of the ABC transporter complex HmuTUV involved in hemin import. Responsible for energy coupling to the transport system. The polypeptide is Hemin import ATP-binding protein HmuV (Shewanella denitrificans (strain OS217 / ATCC BAA-1090 / DSM 15013)).